A 331-amino-acid chain; its full sequence is 6-phosphogluconolactonase (331 aa).

K287 carries the N6-acetyllysine modification.

It belongs to the cycloisomerase 2 family.

The catalysed reaction is 6-phospho-D-glucono-1,5-lactone + H2O = 6-phospho-D-gluconate + H(+). The protein operates within carbohydrate degradation; pentose phosphate pathway; D-ribulose 5-phosphate from D-glucose 6-phosphate (oxidative stage): step 2/3. Catalyzes the hydrolysis of 6-phosphogluconolactone to 6-phosphogluconate. The protein is 6-phosphogluconolactonase of Escherichia coli O127:H6 (strain E2348/69 / EPEC).